The primary structure comprises 259 residues: Cobalt-precorrin-4 C(11)-methyltransferase (259 aa).

Belongs to the precorrin methyltransferase family.

The catalysed reaction is Co-precorrin-4 + S-adenosyl-L-methionine = Co-precorrin-5A + S-adenosyl-L-homocysteine + H(+). The protein operates within cofactor biosynthesis; adenosylcobalamin biosynthesis; cob(II)yrinate a,c-diamide from sirohydrochlorin (anaerobic route): step 4/10. Its function is as follows. Catalyzes the methylation of C-11 in cobalt-precorrin-4 to form cobalt-precorrin-5A. In Methanocaldococcus jannaschii (strain ATCC 43067 / DSM 2661 / JAL-1 / JCM 10045 / NBRC 100440) (Methanococcus jannaschii), this protein is Cobalt-precorrin-4 C(11)-methyltransferase (cbiF).